A 232-amino-acid chain; its full sequence is Phosphatidylserine decarboxylase proenzyme (232 aa).

The active-site Schiff-base intermediate with substrate; via pyruvic acid is the Ser-190. Residue Ser-190 is modified to Pyruvic acid (Ser); by autocatalysis.

It belongs to the phosphatidylserine decarboxylase family. PSD-A subfamily. In terms of assembly, heterodimer of a large membrane-associated beta subunit and a small pyruvoyl-containing alpha subunit. Pyruvate is required as a cofactor. Post-translationally, is synthesized initially as an inactive proenzyme. Formation of the active enzyme involves a self-maturation process in which the active site pyruvoyl group is generated from an internal serine residue via an autocatalytic post-translational modification. Two non-identical subunits are generated from the proenzyme in this reaction, and the pyruvate is formed at the N-terminus of the alpha chain, which is derived from the carboxyl end of the proenzyme. The post-translation cleavage follows an unusual pathway, termed non-hydrolytic serinolysis, in which the side chain hydroxyl group of the serine supplies its oxygen atom to form the C-terminus of the beta chain, while the remainder of the serine residue undergoes an oxidative deamination to produce ammonia and the pyruvoyl prosthetic group on the alpha chain.

It localises to the cell membrane. The catalysed reaction is a 1,2-diacyl-sn-glycero-3-phospho-L-serine + H(+) = a 1,2-diacyl-sn-glycero-3-phosphoethanolamine + CO2. Its pathway is phospholipid metabolism; phosphatidylethanolamine biosynthesis; phosphatidylethanolamine from CDP-diacylglycerol: step 2/2. Functionally, catalyzes the formation of phosphatidylethanolamine (PtdEtn) from phosphatidylserine (PtdSer). This is Phosphatidylserine decarboxylase proenzyme from Rhizobium etli (strain CIAT 652).